Reading from the N-terminus, the 98-residue chain is UPF0358 protein LCA_1078 (98 aa).

This sequence belongs to the UPF0358 family.

The sequence is that of UPF0358 protein LCA_1078 from Latilactobacillus sakei subsp. sakei (strain 23K) (Lactobacillus sakei subsp. sakei).